We begin with the raw amino-acid sequence, 115 residues long: NADH-ubiquinone oxidoreductase chain 3 (115 aa).

3 helical membrane passes run 4-24 (FMAL…AFWL), 55-75 (FFLV…LLPL), and 87-107 (MMLT…YEWV).

The protein belongs to the complex I subunit 3 family. In terms of assembly, core subunit of respiratory chain NADH dehydrogenase (Complex I) which is composed of 45 different subunits. Interacts with TMEM186. Interacts with TMEM242.

Its subcellular location is the mitochondrion inner membrane. It catalyses the reaction a ubiquinone + NADH + 5 H(+)(in) = a ubiquinol + NAD(+) + 4 H(+)(out). In terms of biological role, core subunit of the mitochondrial membrane respiratory chain NADH dehydrogenase (Complex I) which catalyzes electron transfer from NADH through the respiratory chain, using ubiquinone as an electron acceptor. Essential for the catalytic activity of complex I. The protein is NADH-ubiquinone oxidoreductase chain 3 of Osgoodomys banderanus (Michoacan deer mouse).